Consider the following 103-residue polypeptide: Large ribosomal subunit protein eL14 (103 aa).

This sequence belongs to the eukaryotic ribosomal protein eL14 family.

In Ignicoccus hospitalis (strain KIN4/I / DSM 18386 / JCM 14125), this protein is Large ribosomal subunit protein eL14.